Consider the following 497-residue polypeptide: Glycerol kinase (497 aa).

Thr-12 lines the ADP pocket. 3 residues coordinate ATP: Thr-12, Thr-13, and Ser-14. A sn-glycerol 3-phosphate-binding site is contributed by Thr-12. ADP is bound at residue Arg-16. Positions 82, 83, 134, and 243 each coordinate sn-glycerol 3-phosphate. 5 residues coordinate glycerol: Arg-82, Glu-83, Tyr-134, Asp-243, and Gln-244. The ADP site is built by Thr-265 and Gly-308. Residues Thr-265, Gly-308, Gln-312, and Gly-409 each coordinate ATP. ADP is bound by residues Gly-409 and Asn-413.

Belongs to the FGGY kinase family. In terms of assembly, homotetramer and homodimer (in equilibrium).

The catalysed reaction is glycerol + ATP = sn-glycerol 3-phosphate + ADP + H(+). Its pathway is polyol metabolism; glycerol degradation via glycerol kinase pathway; sn-glycerol 3-phosphate from glycerol: step 1/1. Activated by phosphorylation and inhibited by fructose 1,6-bisphosphate (FBP). Functionally, key enzyme in the regulation of glycerol uptake and metabolism. Catalyzes the phosphorylation of glycerol to yield sn-glycerol 3-phosphate. The sequence is that of Glycerol kinase from Caldanaerobacter subterraneus subsp. tengcongensis (strain DSM 15242 / JCM 11007 / NBRC 100824 / MB4) (Thermoanaerobacter tengcongensis).